Consider the following 222-residue polypeptide: MGEEARALDMEEISDNTTRRNDVVHDLMVDLYPLSSYYFGSKEALRVKDEIISDRVIRLKSNYAAHGLRTCVEAVLLVELFKHPHVLLLQYRNSIFKLPGGRLRPGESDIEGLKRKLASKLSVNENVGVSGYEVGECIGMWWRPNFETLMYPFLPPNIKHPKECTKLFLVRLPVHQQFVVPKNFKLLAVPLCQLHENEKTYGPIMSQIPKLLSKFSFNMMEI.

In terms of domain architecture, Nudix hydrolase spans 67–194 (GLRTCVEAVL…KLLAVPLCQL (128 aa)). The interaction with RNA stretch occupies residues 94–96 (SIF). The short motif at 101 to 122 (GRLRPGESDIEGLKRKLASKLS) is the Nudix box element.

This sequence belongs to the Nudix hydrolase family. CPSF5 subfamily. Homodimer. Component of the cleavage factor Im (CFIm) complex. Forms a complex with cleavage and polyadenylation specificity factor (CPSF) subunits FIPS5.

It localises to the nucleus. Component of the cleavage factor Im (CFIm) complex that plays a key role in pre-mRNA 3'-processing. Involved in association with CPSF6 or CPSF7 in pre-MRNA 3'-end poly(A) site cleavage and poly(A) addition. NUDT21/CPSF5 binds to cleavage and polyadenylation RNA substrates. The homodimer mediates simultaneous sequence-specific recognition of two 5'-UGUA-3' elements within the pre-mRNA. Binds to, but does not hydrolyze mono- and di-adenosine nucleotides. May have a role in mRNA export. This Arabidopsis thaliana (Mouse-ear cress) protein is Pre-mRNA cleavage factor Im 25 kDa subunit 1.